Consider the following 156-residue polypeptide: 17.4 kDa class I heat shock protein (156 aa).

Residues 42–156 (DVAAFTNAKV…PEVKSVDISG (115 aa)) enclose the sHSP domain.

This sequence belongs to the small heat shock protein (HSP20) family. As to quaternary structure, may form oligomeric structures. Binds to AKR2A.

It localises to the cytoplasm. The chain is 17.4 kDa class I heat shock protein (HSP17.4A) from Arabidopsis thaliana (Mouse-ear cress).